We begin with the raw amino-acid sequence, 41 residues long: MKIKNSLKSLKTRHRENRLVRRKGRVYIINKSNPRFKARQG.

It belongs to the bacterial ribosomal protein bL36 family.

This chain is Large ribosomal subunit protein bL36, found in Sinorhizobium fredii (strain NBRC 101917 / NGR234).